The following is a 527-amino-acid chain: Inositolphosphotransferase 1 (527 aa).

Residues 1–24 (MNVIFSLASFVKNMYNASLNQRNL) are Cytoplasmic-facing. A helical transmembrane segment spans residues 25 to 45 (ISLPFNFMLNFAPVFIWLSIF). At 46-99 (KRAGLIPIRLRPDIHSKFAFFADQFLFGDYWHELTVQLPDNTSKLFFWSFISSS) the chain is on the lumenal side. The helical transmembrane segment at 100 to 120 (AFLLVFLICIPFAIWYYIYYI) threads the bilayer. Residues 121–152 (KHVNYNLLEWFANIFHYPCKRKQRPIQKRFRT) lie on the Cytoplasmic side of the membrane. A helical transmembrane segment spans residues 153–173 (IFIPFALPLFTFVILNIDHFF). Over 174 to 190 (AYQSDANFTKTKDLLAW) the chain is Lumenal. The chain crosses the membrane as a helical span at residues 191 to 211 (FSYVILHLTAPILTAVYLYVF). Over 212 to 219 (QPPGTLKC) the chain is Cytoplasmic. The chain crosses the membrane as a helical span at residues 220 to 240 (FSFALGLQNIAGVLTHLLVPM). Topologically, residues 241–288 (ASPWFTHLYGIDDTEHVNYTQEGFAAGLIRVDSHLGTHLNTKGFHMSP) are lumenal. A helical membrane pass occupies residues 289 to 309 (IVFGAVPSLHSAIAFQCFLFL). The Cytoplasmic portion of the chain corresponds to 310 to 435 (VSRSTSLKHR…KWIFKIVNDG (126 aa)). Residues 331-404 (NDSSTFKLSE…GGGDGSIINS (74 aa)) are disordered. Residues 376 to 389 (ERSSSPSSSFTVSS) are compositionally biased toward low complexity. Residues 436–456 (FIPKFWAILYIILQWWATMYL) form a helical membrane-spanning segment. Residues 457 to 461 (DHHYR) lie on the Lumenal side of the membrane. A helical membrane pass occupies residues 462 to 482 (FDLFVGVLYAMTSFIIINWFV). At 483 to 527 (LQPKVLKKWIHIRLGDKVDTRNEARTFGMRVFCGTKMEWFFDPLA) the chain is on the cytoplasmic side.

It localises to the golgi apparatus membrane. The catalysed reaction is an alpha-D-mannosyl-(1&lt;-&gt;6)-1D-myo-inositol-1-phospho-N-[(R)-2-hydroxy-very-long-chain fatty acyl]-(R)-4-hydroxysphingoid base + a 1,2-diacyl-sn-glycero-3-phospho-(1D-myo-inositol) = an alpha-D-mannosyl-6-(1D-myo-inositol phospho)-(1&lt;-&gt;6)-1D-myo-inositol-1-phospho-N-[(R)-2-hydroxy-very-long-chain fatty acyl]-(R)-4-hydroxysphingoid base + a 1,2-diacyl-sn-glycerol. The enzyme catalyses a mannosylinositol-1-phospho-N-acyl-sphingoid base + a 1,2-diacyl-sn-glycero-3-phospho-(1D-myo-inositol) = an inositol phosphomannosylnositol-1-phospho-N-acylsphingoid base + a 1,2-diacyl-sn-glycerol. It catalyses the reaction a mannosylinositol-1-phospho-N-(2-hydroxyacyl)-4R-hydroxysphingoid base + a 1,2-diacyl-sn-glycero-3-phospho-(1D-myo-inositol) = an inositol phosphomannosylnositol-1-phospho-N-(2-hydroxyacyl)-4R-hydroxysphingoid base + a 1,2-diacyl-sn-glycerol. Its function is as follows. Catalyzes the addition of a phosphorylinositol group onto mannosyl phosphorylinositol ceramide (MIPC) to form mannosyl diphosphorylinositol ceramide (M(IP)2C), the major sphingolipid in membranes of S.cerevisiae. This chain is Inositolphosphotransferase 1, found in Saccharomyces cerevisiae (strain ATCC 204508 / S288c) (Baker's yeast).